We begin with the raw amino-acid sequence, 31 residues long: Cytochrome b6-f complex subunit 6 (31 aa).

The chain crosses the membrane as a helical span at residues 4–24 (LLSYFGFLFAILTLTSVLFIG).

Belongs to the PetL family. The 4 large subunits of the cytochrome b6-f complex are cytochrome b6, subunit IV (17 kDa polypeptide, PetD), cytochrome f and the Rieske protein, while the 4 small subunits are PetG, PetL, PetM and PetN. The complex functions as a dimer.

The protein localises to the plastid. The protein resides in the chloroplast thylakoid membrane. In terms of biological role, component of the cytochrome b6-f complex, which mediates electron transfer between photosystem II (PSII) and photosystem I (PSI), cyclic electron flow around PSI, and state transitions. PetL is important for photoautotrophic growth as well as for electron transfer efficiency and stability of the cytochrome b6-f complex. The chain is Cytochrome b6-f complex subunit 6 from Angiopteris evecta (Mule's foot fern).